The chain runs to 57 residues: uncharacterized protein (57 aa).

Proetin of unknown function whose overexpression causes growth inhibition. Overexpression increases the expression of ergosterol synthesis genes. This is an uncharacterized protein from Saccharomyces cerevisiae (strain ATCC 204508 / S288c) (Baker's yeast).